The sequence spans 382 residues: Anhydro-N-acetylmuramic acid kinase (382 aa).

Residue 15 to 22 (GTSLDGVD) participates in ATP binding.

It belongs to the anhydro-N-acetylmuramic acid kinase family.

The catalysed reaction is 1,6-anhydro-N-acetyl-beta-muramate + ATP + H2O = N-acetyl-D-muramate 6-phosphate + ADP + H(+). Its pathway is amino-sugar metabolism; 1,6-anhydro-N-acetylmuramate degradation. The protein operates within cell wall biogenesis; peptidoglycan recycling. Functionally, catalyzes the specific phosphorylation of 1,6-anhydro-N-acetylmuramic acid (anhMurNAc) with the simultaneous cleavage of the 1,6-anhydro ring, generating MurNAc-6-P. Is required for the utilization of anhMurNAc either imported from the medium or derived from its own cell wall murein, and thus plays a role in cell wall recycling. The sequence is that of Anhydro-N-acetylmuramic acid kinase from Haemophilus influenzae (strain ATCC 51907 / DSM 11121 / KW20 / Rd).